The sequence spans 445 residues: tRNA-2-methylthio-N(6)-dimethylallyladenosine synthase (445 aa).

Positions 3-124 (KKLYIKTYGC…LPELISKVVR (122 aa)) constitute an MTTase N-terminal domain. Residues C12, C48, C87, C162, C166, and C169 each contribute to the [4Fe-4S] cluster site. Residues 148–380 (YPQGASSFIS…QQELTAQQLA (233 aa)) form the Radical SAM core domain. The TRAM domain occupies 383 to 445 (ESCVGSIMKV…ASNSLTGEVI (63 aa)).

This sequence belongs to the methylthiotransferase family. MiaB subfamily. In terms of assembly, monomer. [4Fe-4S] cluster is required as a cofactor.

The protein resides in the cytoplasm. The enzyme catalyses N(6)-dimethylallyladenosine(37) in tRNA + (sulfur carrier)-SH + AH2 + 2 S-adenosyl-L-methionine = 2-methylsulfanyl-N(6)-dimethylallyladenosine(37) in tRNA + (sulfur carrier)-H + 5'-deoxyadenosine + L-methionine + A + S-adenosyl-L-homocysteine + 2 H(+). Its function is as follows. Catalyzes the methylthiolation of N6-(dimethylallyl)adenosine (i(6)A), leading to the formation of 2-methylthio-N6-(dimethylallyl)adenosine (ms(2)i(6)A) at position 37 in tRNAs that read codons beginning with uridine. The polypeptide is tRNA-2-methylthio-N(6)-dimethylallyladenosine synthase (Rickettsia felis (strain ATCC VR-1525 / URRWXCal2) (Rickettsia azadi)).